A 176-amino-acid polypeptide reads, in one-letter code: RNA pyrophosphohydrolase (176 aa).

The 144-residue stretch at 6-149 (GYRPNVGIVI…KRDVYRRVMK (144 aa)) folds into the Nudix hydrolase domain. The short motif at 38-59 (GGINPGESAEQAMYRELFEEVG) is the Nudix box element.

It belongs to the Nudix hydrolase family. RppH subfamily. A divalent metal cation is required as a cofactor.

In terms of biological role, accelerates the degradation of transcripts by removing pyrophosphate from the 5'-end of triphosphorylated RNA, leading to a more labile monophosphorylated state that can stimulate subsequent ribonuclease cleavage. The protein is RNA pyrophosphohydrolase of Shigella dysenteriae serotype 1 (strain Sd197).